A 516-amino-acid polypeptide reads, in one-letter code: 3-phosphoshikimate 1-carboxyvinyltransferase, chloroplastic (516 aa).

The transit peptide at 1–72 directs the protein to the chloroplast; that stretch reads MAQSSRICHG…KVTASVSTSE (72 aa). The 3-phosphoshikimate site is built by lysine 95, serine 96, and arginine 100. Lysine 95 contributes to the phosphoenolpyruvate binding site. Positions 173 and 203 each coordinate phosphoenolpyruvate. Positions 250, 251, 252, 278, 403, and 430 each coordinate 3-phosphoshikimate. Residue glutamine 252 coordinates phosphoenolpyruvate. Aspartate 403 acts as the Proton acceptor in catalysis. Arginine 434, arginine 476, and lysine 501 together coordinate phosphoenolpyruvate.

The protein belongs to the EPSP synthase family.

Its subcellular location is the plastid. The protein localises to the chloroplast. It catalyses the reaction 3-phosphoshikimate + phosphoenolpyruvate = 5-O-(1-carboxyvinyl)-3-phosphoshikimate + phosphate. The protein operates within metabolic intermediate biosynthesis; chorismate biosynthesis; chorismate from D-erythrose 4-phosphate and phosphoenolpyruvate: step 6/7. Functionally, catalyzes the transfer of the enolpyruvyl moiety of phosphoenolpyruvate (PEP) to the 5-hydroxyl of shikimate-3-phosphate (S3P) to produce enolpyruvyl shikimate-3-phosphate and inorganic phosphate. The chain is 3-phosphoshikimate 1-carboxyvinyltransferase, chloroplastic from Brassica napus (Rape).